A 517-amino-acid polypeptide reads, in one-letter code: Pentatricopeptide repeat-containing protein At1g77360, mitochondrial (517 aa).

A mitochondrion-targeting transit peptide spans 1-59; sequence MKRFRIRSVDFRQLVNFFSFMRWECSSSATVWVRFNMTIRIINRQSRFCCKSFLSARLY. PPR repeat units follow at residues 133 to 163, 167 to 201, 202 to 232, 236 to 270, 271 to 305, 306 to 340, 341 to 375, 376 to 406, 410 to 444, and 445 to 479; these read SVRAYHMMIESTAKIRQYKLMWDLINAMRKK, NVETFCIVMRKYARAQKVDEAIYAFNVMEKYDLPP, NLVAFNGLLSALCKSKNVRKAQEVFENMRDR, DSKTYSILLEGWGKEPNLPKAREVFREMIDAGCHP, DIVTYSIMVDILCKAGRVDEALGIVRSMDPSICKP, TTFIYSVLVHTYGTENRLEEAVDTFLEMERSGMKA, DVAVFNSLIGAFCKANRMKNVYRVLKEMKSKGVTP, NSKSCNIILRHLIERGEKDEAFDVFRKMIKV, DADTYTMVIKMFCEKKEMETADKVWKYMRKKGVFP, and SMHTFSVLINGLCEERTTQKACVLLEEMIEMGIRP.

Belongs to the PPR family. P subfamily.

It localises to the mitochondrion. This chain is Pentatricopeptide repeat-containing protein At1g77360, mitochondrial, found in Arabidopsis thaliana (Mouse-ear cress).